The following is a 978-amino-acid chain: Copper-transporting ATPase HMA4 (978 aa).

Basic and acidic residues predominate over residues Met1 to Asp11. Residues Met1 to Lys35 are disordered. HMA domains lie at Arg37–Asp103, Ala111–Asp177, and Asn186–Lys252. 4 residues coordinate Cu(+): Cys48, Cys51, Cys122, and Cys125. 8 consecutive transmembrane segments (helical) span residues Phe280 to Ile300, Met315 to Trp335, Met352 to Leu372, Phe385 to Val405, Phe545 to Gly565, Leu584 to Ala604, Val907 to Phe927, and Trp935 to Leu955.

This sequence belongs to the cation transport ATPase (P-type) (TC 3.A.3) family. Type IB subfamily. As to expression, highly expressed in roots. Expressed in vascular tissues of the stele, mainly in pericycle cells.

Its subcellular location is the vacuole membrane. The enzyme catalyses Cu(+)(in) + ATP + H2O = Cu(+)(out) + ADP + phosphate + H(+). Copper (Cu) transporter that mediates Cu transport in root vacuoles. Involved in Cu detoxification by sequestrating Cu into root vacuoles and limiting translocation of Cu from the roots to the shoots, and accumulation in grains. The polypeptide is Copper-transporting ATPase HMA4 (Oryza sativa subsp. japonica (Rice)).